We begin with the raw amino-acid sequence, 392 residues long: Mycofactocin maturase MftC (392 aa).

Residues 18–228 enclose the Radical SAM core domain; that stretch reads LDAPICLTWE…YDWLVAKGDR (211 aa). Residues Cys-32, Cys-36, Cys-39, Cys-253, Cys-260, Cys-271, Cys-312, Cys-315, Cys-321, Cys-325, and Cys-343 each coordinate [4Fe-4S] cluster. Basic and acidic residues predominate over residues 354–367; it reads KERVKPKPSGDHSR. The segment at 354-377 is disordered; the sequence is KERVKPKPSGDHSRGTKQGPVALK.

Belongs to the radical SAM superfamily. MftC family. [4Fe-4S] cluster is required as a cofactor.

The catalysed reaction is [mycofactocin precursor peptide]-C-terminal glycyl-L-valyl-L-tyrosine + S-adenosyl-L-methionine = [mycofactocin precursor peptide]-C-terminal glycyl-N-{[2-(4-hydroxyphenyl)ethenyl]-3-methylbutanamide} + 5'-deoxyadenosine + L-methionine + CO2. It catalyses the reaction [mycofactocin precursor peptide]-C-terminal glycyl-N-{[2-(4-hydroxyphenyl)ethenyl]-3-methylbutanamide} + AH2 + S-adenosyl-L-methionine = [mycofactocin precursor peptide]-C-terminal glycyl-N-{5-[(4-hydroxyphenyl)methyl]-4,4-dimethyl-2-oxopyrrolidin-3-yl}acetamide + 5'-deoxyadenosine + L-methionine + A + H(+). Functionally, radical S-adenosylmethionine (SAM) enzyme responsible for the first step of the biosynthesis of the enzyme cofactor mycofactocin (MFT). Catalyzes two reactions at the C-terminus of the mycofactocin precursor (the MftA peptide). The first one is the oxidative decarboxylation of the C-terminal L-tyrosine of MftA, forming an unsaturated tyramine moiety. The second reaction is the cross-linking of the tyramine with the penultimate L-valine residue, forming a five-membered lactam ring. Its activity requires the presence of the MftB chaperone. Is required for the in vivo ethanol assimilation in M.smegmatis. This chain is Mycofactocin maturase MftC, found in Mycolicibacterium smegmatis (strain ATCC 700084 / mc(2)155) (Mycobacterium smegmatis).